The following is a 461-amino-acid chain: Photosystem II CP43 reaction center protein (461 aa).

Positions 1 to 2 (ME) are excised as a propeptide. Residue Thr3 is modified to N-acetylthreonine. Thr3 carries the post-translational modification Phosphothreonine. A run of 5 helical transmembrane segments spans residues 57–81 (LFEVAHFVPEKPMYEQGLILLPHLA), 122–143 (LIGPETLEESFPFFGYVWKDKN), 166–188 (KAMYFGGVYDTWAPGGGDVRIIT), 243–263 (TPWPWARRAFVWSGEAYLSYS), and 279–300 (WFNNTAYPSEFYGPTGPEASQS). Residue Glu355 participates in [CaMn4O5] cluster binding. A helical membrane pass occupies residues 435-459 (RARAAAAGFEKGIDRLDEPVLSMRP).

The protein belongs to the PsbB/PsbC family. PsbC subfamily. As to quaternary structure, PSII is composed of 1 copy each of membrane proteins PsbA, PsbB, PsbC, PsbD, PsbE, PsbF, PsbH, PsbI, PsbJ, PsbK, PsbL, PsbM, PsbT, PsbX, PsbY, PsbZ, Psb30/Ycf12, at least 3 peripheral proteins of the oxygen-evolving complex and a large number of cofactors. It forms dimeric complexes. It depends on Binds multiple chlorophylls and provides some of the ligands for the Ca-4Mn-5O cluster of the oxygen-evolving complex. It may also provide a ligand for a Cl- that is required for oxygen evolution. PSII binds additional chlorophylls, carotenoids and specific lipids. as a cofactor.

Its subcellular location is the plastid. It localises to the chloroplast thylakoid membrane. One of the components of the core complex of photosystem II (PSII). It binds chlorophyll and helps catalyze the primary light-induced photochemical processes of PSII. PSII is a light-driven water:plastoquinone oxidoreductase, using light energy to abstract electrons from H(2)O, generating O(2) and a proton gradient subsequently used for ATP formation. This is Photosystem II CP43 reaction center protein from Tetradesmus obliquus (Green alga).